The primary structure comprises 326 residues: MSKSNQKIASIEQLSNNEGIISALAFDQRGALKRMMAKHQTEEPTVAQIEQLKVLVAEELTQYASSILLDPEYGLPASDARNKDCGLLLAYEKTGYDVNAKGRLPDCLVQWSAKRLKEQGANAVKFLLYYDVDDAEEINIQKKAYIERIGSECVAEDIPFFLEVLTYDDNIPDNGSVEFAKVKPRKVNEAMKLFSEPRFNVDVLKVEVPVNMKYVEGFAEGEVVYTKEEAAQHFKNQDAATHLPYIYLSAGVSAELFQETLKFAHEAGAKFNGVLCGRATWSGAVQVYIEQGEDAAREWLRTTGFKNIDDLNKVLKDTATSWKQRK.

Belongs to the aldolase LacD family.

The catalysed reaction is D-tagatofuranose 1,6-bisphosphate = D-glyceraldehyde 3-phosphate + dihydroxyacetone phosphate. Its pathway is carbohydrate metabolism; D-tagatose 6-phosphate degradation; D-glyceraldehyde 3-phosphate and glycerone phosphate from D-tagatose 6-phosphate: step 2/2. The polypeptide is Tagatose 1,6-diphosphate aldolase (Staphylococcus aureus (strain MW2)).